The primary structure comprises 751 residues: MLRVLFLLCGLSGLRTKENSERLHVQVTVPEKMRSVTSEGFETEVVYNIVIEGKTYTLNLMQKLFLPRDFRVYGYDSTGIMKDLEQQFQNFCYYQGFVEGYPNSMVIVSTCTGLRGLLQFENVTYGIEPLESSIGFEHVIYQVKNKNESISLYAEKEVEFRDLPYKVQSVQPREFSQYIEMHVVVEKNLYKHMGSDTAVVSQKIFQLIGLTNAVFTSFNITIILSSLELWIDENKISTTGDANELLYRFLKWKKSYLVLRPHDVAFLLVYREIAKYVGATFQGKMCDINYSGGVALHPKTISLESLAIILAQLLSLSMGIAYDDINKCKCPGSVCIMNPEAIHSSGVKIFSNCSIEDFSRFISKQKSQCLQNLPRLEPFYKQDAVCGNSIVEAGEMCDCGTAEECGRAVPICCNSATCRLEVGSQCAEGECCENCTFKERGQSCRPPVGECDLFEYCNGTSALCPDDIVIQNGHPCGENQWICVDGSCISPPEQCKSIFGEEVEGGTPECYEELNAMADIILGICGITHDGYKKCESGNRKCGKLMCKHTTENIIDIKNATIIYANVSGSICLSLEYKPDHLDAAKMWVPNGAVCGSNKICRDKACVETTYVNLGCTLQNCNNQGICNSLQHCHCNPTFLPPNCSAVDERWAGGSVDSGNFQGGGVPGIGGLTSVGTPPFIPGVPGVRRYMEDVYQTAKPTRWPFFLLIPFFIILGALIAILVKVQFQRKKWKTEDYTSDEQFESDSELKE.

The signal sequence occupies residues 1 to 16 (MLRVLFLLCGLSGLRT). Positions 17–173 (KENSERLHVQ…PYKVQSVQPR (157 aa)) are excised as a propeptide. Residues 17-702 (KENSERLHVQ…DVYQTAKPTR (686 aa)) are Extracellular-facing. 4 N-linked (GlcNAc...) asparagine glycosylation sites follow: Asn-122, Asn-147, Asn-219, and Asn-289. The region spanning 177-374 (QYIEMHVVVE…QKSQCLQNLP (198 aa)) is the Peptidase M12B domain. Disulfide bonds link Cys-286-Cys-369, Cys-328-Cys-353, and Cys-330-Cys-335. 5 N-linked (GlcNAc...) asparagine glycosylation sites follow: Asn-352, Asn-434, Asn-458, Asn-559, and Asn-566. One can recognise a Disintegrin domain in the interval 383-472 (DAVCGNSIVE…LCPDDIVIQN (90 aa)). Cys-444 and Cys-464 form a disulfide bridge. Positions 612-645 (VNLGCTLQNCNNQGICNSLQHCHCNPTFLPPNCS) constitute an EGF-like domain. 3 disulfide bridges follow: Cys-616/Cys-627, Cys-621/Cys-633, and Cys-635/Cys-644. Asn-643 carries N-linked (GlcNAc...) asparagine glycosylation. A helical transmembrane segment spans residues 703–723 (WPFFLLIPFFIILGALIAILV). Residues 724–751 (KVQFQRKKWKTEDYTSDEQFESDSELKE) are Cytoplasmic-facing. Ser-745 carries the post-translational modification Phosphoserine.

As to quaternary structure, heterodimer with ADAM1/fertilin subunit alpha. In terms of processing, the signal and the metalloprotease domain are cleaved during the epididymal maturation of the spermatozoa. Expressed specifically in testis.

It localises to the membrane. In terms of biological role, sperm surface membrane protein that may be involved in sperm-egg plasma membrane adhesion and fusion during fertilization. Could have a direct role in sperm-zona binding or migration of sperm from the uterus into the oviduct. Interactions with egg membrane could be mediated via binding between its disintegrin-like domain to one or more integrins receptors on the egg. This is a non catalytic metalloprotease-like protein. The polypeptide is Disintegrin and metalloproteinase domain-containing protein 2 (ADAM2) (Oryctolagus cuniculus (Rabbit)).